The sequence spans 174 residues: Trypsin inhibitor (174 aa).

2 disulfide bridges follow: cysteine 40-cysteine 86 and cysteine 131-cysteine 140.

This sequence belongs to the protease inhibitor I3 (leguminous Kunitz-type inhibitor) family. As to quaternary structure, heterodimer of an alpha and a beta chain linked by a disulfide bond.

In terms of biological role, inhibits trypsin and chymotrypsin with a 1:1 stoichiometry, with dissociation constants of 1.56 nM and 120 nM respectively. Inhibits plasma kallikrein, factor XIIa and plasmin with dissociation constants of 5.0 nM, 150 nM and 18 nM respectively. Does not inhibit factor Xa, thrombin, tissue kallikrein or cysteine proteinases such as papain and bromelain. The sequence is that of Trypsin inhibitor from Enterolobium contortisiliquum (Pacara earpod tree).